The primary structure comprises 217 residues: Cytidylate kinase (217 aa).

Position 21–29 (21–29 (GPAASGKGT)) interacts with ATP.

The protein belongs to the cytidylate kinase family. Type 1 subfamily.

Its subcellular location is the cytoplasm. It catalyses the reaction CMP + ATP = CDP + ADP. The enzyme catalyses dCMP + ATP = dCDP + ADP. This chain is Cytidylate kinase, found in Rickettsia bellii (strain OSU 85-389).